An 88-amino-acid polypeptide reads, in one-letter code: Auxin-responsive protein SAUR21 (88 aa).

The protein belongs to the ARG7 family.

The protein resides in the cell membrane. Its function is as follows. Functions as a positive effector of cell expansion through modulation of auxin transport. This chain is Auxin-responsive protein SAUR21, found in Arabidopsis thaliana (Mouse-ear cress).